Here is a 224-residue protein sequence, read N- to C-terminus: 7-cyano-7-deazaguanine synthase (224 aa).

Residue 12 to 22 (LSGGLDSSTVT) participates in ATP binding. Zn(2+)-binding residues include Cys-193, Cys-201, Cys-204, and Cys-207.

Belongs to the QueC family. It depends on Zn(2+) as a cofactor.

The catalysed reaction is 7-carboxy-7-deazaguanine + NH4(+) + ATP = 7-cyano-7-deazaguanine + ADP + phosphate + H2O + H(+). It functions in the pathway purine metabolism; 7-cyano-7-deazaguanine biosynthesis. Its function is as follows. Catalyzes the ATP-dependent conversion of 7-carboxy-7-deazaguanine (CDG) to 7-cyano-7-deazaguanine (preQ(0)). This Prochlorococcus marinus (strain AS9601) protein is 7-cyano-7-deazaguanine synthase.